Reading from the N-terminus, the 375-residue chain is o-succinylbenzoate synthase (375 aa).

K166 (proton donor) is an active-site residue. 3 residues coordinate Mg(2+): D191, E216, and D241. The active-site Proton acceptor is K265.

It belongs to the mandelate racemase/muconate lactonizing enzyme family. MenC type 2 subfamily. In terms of assembly, homotetramer. The cofactor is a divalent metal cation.

It carries out the reaction (1R,6R)-6-hydroxy-2-succinyl-cyclohexa-2,4-diene-1-carboxylate = 2-succinylbenzoate + H2O. The catalysed reaction is N-acetyl-D-methionine = N-acetyl-L-methionine. It functions in the pathway quinol/quinone metabolism; 1,4-dihydroxy-2-naphthoate biosynthesis; 1,4-dihydroxy-2-naphthoate from chorismate: step 4/7. Its pathway is quinol/quinone metabolism; menaquinone biosynthesis. Its function is as follows. Converts 2-succinyl-6-hydroxy-2,4-cyclohexadiene-1-carboxylate (SHCHC) to 2-succinylbenzoate (OSB). Also acts as a N-succinylamino acid racemase (NSAR) that catalyzes the racemization of N-succinyl-D/L-phenylalanine. Can catalyze the racemization of a broad range of N-acylamino acids, including N-acetyl-D-methionine, N-formyl-D/L-methionine, N-formyl-D/L-norleucine, N-formyl-D/L-aminobutyric acid, N-formyl-D/L-norvaline, N-formyl-D/L-homophenylalanine, N-carbamoyl-D-methionine and N-carbamoyl-D-norleucine. May be a bifunctional enzyme involved in menaquinone biosynthesis and in an irreversible pathway for the conversion of D- to L-amino acids, thereby facilitating the survival and/or growth of the organism. This Geobacillus stearothermophilus (Bacillus stearothermophilus) protein is o-succinylbenzoate synthase.